The sequence spans 299 residues: Mitochondrial 2-oxodicarboxylate carrier (299 aa).

Solcar repeat units lie at residues 11–100 (REAS…YKKL), 107–196 (SPAL…VKNM), and 205–294 (LEFW…TYSW). The next 6 helical transmembrane spans lie at 17–37 (IVAG…LDVV), 70–89 (FGFY…KRAV), 113–133 (AIAG…FEVV), 167–187 (GLNK…MVYF), 205–225 (LEFW…SVIN), and 277–297 (LGPG…WLQE).

Belongs to the mitochondrial carrier (TC 2.A.29) family. Expressed in placenta, gall bladder and colon.

It is found in the mitochondrion inner membrane. It catalyses the reaction 2-oxoadipate(in) + 2-oxoglutarate(out) = 2-oxoadipate(out) + 2-oxoglutarate(in). The enzyme catalyses hexanedioate(in) + 2-oxoglutarate(out) = hexanedioate(out) + 2-oxoglutarate(in). It carries out the reaction L-2-aminoadipate(in) + 2-oxoglutarate(out) = L-2-aminoadipate(out) + 2-oxoglutarate(in). The catalysed reaction is glutarate(in) + 2-oxoglutarate(out) = glutarate(out) + 2-oxoglutarate(in). It catalyses the reaction 2-oxoheptanedioate(in) + 2-oxoglutarate(out) = 2-oxoheptanedioate(out) + 2-oxoglutarate(in). The enzyme catalyses heptanedioate(in) + 2-oxoglutarate(out) = heptanedioate(out) + 2-oxoglutarate(in). It carries out the reaction citrate(in) + 2-oxoglutarate(out) = citrate(out) + 2-oxoglutarate(in). Transports dicarboxylates across the inner membranes of mitochondria by a counter-exchange mechanism. Can transport 2-oxoadipate (2-oxohexanedioate), 2-oxoglutarate, adipate (hexanedioate), glutarate, and to a lesser extent, pimelate (heptanedioate), 2-oxopimelate (2-oxoheptanedioate), 2-aminoadipate (2-aminohexanedioate), oxaloacetate, and citrate. Plays a central role in catabolism of lysine, hydroxylysine, and tryptophan, by transporting common metabolite intermediates (such as 2-oxoadipate) into the mitochondria, where it is converted into acetyl-CoA and can enter the citric acid (TCA) cycle. The polypeptide is Mitochondrial 2-oxodicarboxylate carrier (SLC25A21) (Homo sapiens (Human)).